A 623-amino-acid polypeptide reads, in one-letter code: Adenine deaminase 2 (623 aa).

Belongs to the metallo-dependent hydrolases superfamily. Adenine deaminase family. It depends on Mn(2+) as a cofactor.

It carries out the reaction adenine + H2O + H(+) = hypoxanthine + NH4(+). This Jannaschia sp. (strain CCS1) protein is Adenine deaminase 2.